The following is a 400-amino-acid chain: D(3) dopamine receptor (400 aa).

Over 1–32 the chain is Extracellular; sequence MAPLSQLSGHLNYTCGVENSTGASQARPHAYY. 2 N-linked (GlcNAc...) asparagine glycosylation sites follow: N12 and N19. A helical transmembrane segment spans residues 33–55; the sequence is ALSYCALILAIVFGNGLVCMAVL. The Cytoplasmic segment spans residues 56-65; sequence KERALQTTTN. Residues 66–88 form a helical membrane-spanning segment; that stretch reads YLVVSLAVADLLVATLVMPWVVY. Over 89 to 104 the chain is Extracellular; it reads LEVTGGVWNFSRVCCD. N-linked (GlcNAc...) asparagine glycosylation occurs at N97. Cysteines 103 and 181 form a disulfide. The helical transmembrane segment at 105 to 126 threads the bilayer; sequence VFVTLDVMMCTASILNLCAISI. The Cytoplasmic portion of the chain corresponds to 127 to 149; that stretch reads DRYTAVVMPVHYQHGTGQSSCRR. Residues 150 to 170 traverse the membrane as a helical segment; it reads VTLMITAVWVLAFAVSCPLLF. Residues 171 to 187 are Extracellular-facing; it reads GFNTTGDPTVCSISNPD. The N-linked (GlcNAc...) asparagine glycan is linked to N173. Residues 188-209 traverse the membrane as a helical segment; the sequence is FVIYSSVVSFYLPFGVTVLVYA. Topologically, residues 210-329 are cytoplasmic; sequence RIYVVLKQRR…VPLREKKATQ (120 aa). The chain crosses the membrane as a helical span at residues 330 to 351; the sequence is MVAIVLGAFIVCWLPFFLTHVL. The Extracellular segment spans residues 352 to 366; the sequence is NTHCQTCHVSPELYS. A disulfide bond links C355 and C358. A helical transmembrane segment spans residues 367–386; the sequence is ATTWLGYVNSALNPVIYTTF. Topologically, residues 387 to 400 are cytoplasmic; that stretch reads NIEFRKAFLKILSC.

It belongs to the G-protein coupled receptor 1 family. Interacts with CLIC6. Interacts with GRK4. Interacts with PALM. Interacts with FLNA (via filamin repeat 21); increases PKA-mediated phosphorylation of FLNA. Post-translationally, phosphorylated by GRK4. Palmitoylated.

The protein resides in the cell membrane. Functionally, dopamine receptor whose activity is mediated by G proteins which inhibit adenylyl cyclase. Promotes cell proliferation. The chain is D(3) dopamine receptor (DRD3) from Chlorocebus aethiops (Green monkey).